The chain runs to 248 residues: Small ribosomal subunit protein uS3 (248 aa).

The 69-residue stretch at 38-106 (VREYLVKTLD…QVALNILEVK (69 aa)) folds into the KH type-2 domain. Positions 213-230 (ESEINAPAERRGRGDRNG) are enriched in basic and acidic residues. Positions 213 to 248 (ESEINAPAERRGRGDRNGRPRRGGQRRQRSEQKQEG) are disordered.

It belongs to the universal ribosomal protein uS3 family. In terms of assembly, part of the 30S ribosomal subunit. Forms a tight complex with proteins S10 and S14.

In terms of biological role, binds the lower part of the 30S subunit head. Binds mRNA in the 70S ribosome, positioning it for translation. The sequence is that of Small ribosomal subunit protein uS3 from Corynebacterium diphtheriae (strain ATCC 700971 / NCTC 13129 / Biotype gravis).